The sequence spans 536 residues: Heat shock factor protein 2 (536 aa).

Glycyl lysine isopeptide (Lys-Gly) (interchain with G-Cter in SUMO2) cross-links involve residues K2 and K82. Residues 7–112 (VPAFLSKLWT…LLENIKRKVS (106 aa)) mediate DNA binding. Positions 108-122 (KRKVSSSKPEENKIR) match the Nuclear localization signal motif. The hydrophobic repeat HR-A/B stretch occupies residues 119 to 192 (NKIRQEDLTK…VTLVQNNQLV (74 aa)). Glycyl lysine isopeptide (Lys-Gly) (interchain with G-Cter in SUMO2) cross-links involve residues K135, K139, K151, K210, K218, and K237. Positions 195-210 (KRKRPLLLNTNGAQKK) match the Nuclear localization signal motif. Residues 300–337 (QSGEQNEPARESLSSGSDGSSPLMSSAVQLNGSSSLTS) are disordered. The span at 311-325 (SLSSGSDGSSPLMSS) shows a compositional bias: low complexity. The span at 326–337 (AVQLNGSSSLTS) shows a compositional bias: polar residues. The segment at 360–385 (LLDYLDSIDCSLEDFQAMLSGRQFSI) is hydrophobic repeat HR-C. Residues 407-438 (NNTKSENKGLETTKNNVVQPVSEEGRKSKSKP) form a disordered region. The segment covering 429 to 438 (EEGRKSKSKP) has biased composition (basic and acidic residues).

This sequence belongs to the HSF family. DNA-binding homotrimer in stressed or heat shocked cells, otherwise found as a homodimer.

It is found in the cytoplasm. It localises to the nucleus. DNA-binding protein that specifically binds heat shock promoter elements (HSE) and activates transcription. In higher eukaryotes, HSF is unable to bind to the HSE unless the cells are heat shocked. The sequence is that of Heat shock factor protein 2 (HSF2) from Homo sapiens (Human).